The chain runs to 339 residues: HTH-type transcriptional regulator KdgR (339 aa).

In terms of domain architecture, HTH lacI-type spans 9–64 (TTIKDVAECAGVSKSTVSRYINGKIDAISPEKVKNIKKAIAELNYRPSKMAQGLKI). A DNA-binding region (H-T-H motif) is located at residues 11-30 (IKDVAECAGVSKSTVSRYIN).

In terms of biological role, transcriptional repressor of the kdgRKAT and kduID operons for pectin utilization. The chain is HTH-type transcriptional regulator KdgR (kdgR) from Bacillus subtilis (strain 168).